Here is a 747-residue protein sequence, read N- to C-terminus: Phenylalanine ammonia-lyase 2 (747 aa).

Positions 1–20 are enriched in polar residues; the sequence is MTILSGTTAAPRVNGTTMNG. Residues 1-47 are disordered; that stretch reads MTILSGTTAAPRVNGTTMNGHSKPHTNGVHLNGHAPKATTESPWPQS. The Proton donor/acceptor role is filled by Y124. Positions 229 to 231 form a cross-link, 5-imidazolinone (Ala-Gly); it reads ASG. At S230 the chain carries 2,3-didehydroalanine (Ser). (E)-cinnamate is bound by residues N290, Q380, R386, N416, K487, E515, and N518.

It belongs to the PAL/histidase family. As to quaternary structure, homotetramer. Contains an active site 4-methylidene-imidazol-5-one (MIO), which is formed autocatalytically by cyclization and dehydration of residues Ala-Ser-Gly.

It localises to the cytoplasm. It carries out the reaction L-phenylalanine = (E)-cinnamate + NH4(+). The protein operates within phenylpropanoid metabolism; trans-cinnamate biosynthesis; trans-cinnamate from L-phenylalanine: step 1/1. In terms of biological role, catalyzes the non-oxidative deamination of L-phenylalanine to form trans-cinnamic acid and a free ammonium ion. Facilitates the commitment step in phenylpropanoid pathways that produce secondary metabolites such as lignins, coumarins and flavonoids. The protein is Phenylalanine ammonia-lyase 2 of Pleurotus ostreatus (Oyster mushroom).